The following is a 161-amino-acid chain: Calmodulin-like protein (161 aa).

EF-hand domains follow at residues 21 to 56, 57 to 92, 93 to 128, and 129 to 161; these read EEID…LGQN, PTEQ…MMKE, TDSE…MGMQ, and FSEE…MSNQ. Ca(2+) contacts are provided by D34, D36, N38, T40, E45, D70, D72, N74, Q76, E81, D106, D108, N110, E117, D142, D144, D146, E148, and E153.

Belongs to the calmodulin family.

This protein resembles calmodulin in sequence but possibly resembles troponin C in function. The protein is Calmodulin-like protein (cal-1) of Caenorhabditis elegans.